The sequence spans 828 residues: Beta-galactosidase 13 (828 aa).

The N-terminal stretch at 1-23 (MKTTMAAAATCLVALLVVVLAEA) is a signal peptide. Asn157 is a glycosylation site (N-linked (GlcNAc...) asparagine). The active-site Proton donor is Glu187. Residues Asn198 and Asn249 are each glycosylated (N-linked (GlcNAc...) asparagine). The active-site Nucleophile is Glu259. Asn260, Asn362, Asn366, Asn392, Asn502, Asn578, Asn586, and Asn615 each carry an N-linked (GlcNAc...) asparagine glycan. An SUEL-type lectin domain is found at 746-828 (AEVGDAITLS…SGVLTVQASC (83 aa)).

This sequence belongs to the glycosyl hydrolase 35 family.

Its subcellular location is the secreted. The protein resides in the extracellular space. The protein localises to the apoplast. The enzyme catalyses Hydrolysis of terminal non-reducing beta-D-galactose residues in beta-D-galactosides.. The polypeptide is Beta-galactosidase 13 (Oryza sativa subsp. japonica (Rice)).